The chain runs to 298 residues: Small ribosomal subunit protein uS2 (298 aa).

It belongs to the universal ribosomal protein uS2 family.

The protein is Small ribosomal subunit protein uS2 of Leifsonia xyli subsp. xyli (strain CTCB07).